We begin with the raw amino-acid sequence, 71 residues long: DNA-directed RNA polymerase subunit omega (71 aa).

This sequence belongs to the RNA polymerase subunit omega family. In terms of assembly, the RNAP catalytic core consists of 2 alpha, 1 beta, 1 beta' and 1 omega subunit. When a sigma factor is associated with the core the holoenzyme is formed, which can initiate transcription.

It carries out the reaction RNA(n) + a ribonucleoside 5'-triphosphate = RNA(n+1) + diphosphate. In terms of biological role, promotes RNA polymerase assembly. Latches the N- and C-terminal regions of the beta' subunit thereby facilitating its interaction with the beta and alpha subunits. In Azoarcus sp. (strain BH72), this protein is DNA-directed RNA polymerase subunit omega.